The chain runs to 300 residues: Nucleotide-binding protein TM1040_2438 (300 aa).

Position 24-31 (24-31) interacts with ATP; sequence GPSGAGRT. 71–74 is a GTP binding site; the sequence is DPRN.

Belongs to the RapZ-like family.

Functionally, displays ATPase and GTPase activities. The polypeptide is Nucleotide-binding protein TM1040_2438 (Ruegeria sp. (strain TM1040) (Silicibacter sp.)).